A 399-amino-acid polypeptide reads, in one-letter code: Tryptophan synthase beta chain (399 aa).

K92 is subject to N6-(pyridoxal phosphate)lysine.

It belongs to the TrpB family. Tetramer of two alpha and two beta chains. Pyridoxal 5'-phosphate is required as a cofactor.

It carries out the reaction (1S,2R)-1-C-(indol-3-yl)glycerol 3-phosphate + L-serine = D-glyceraldehyde 3-phosphate + L-tryptophan + H2O. The protein operates within amino-acid biosynthesis; L-tryptophan biosynthesis; L-tryptophan from chorismate: step 5/5. Its function is as follows. The beta subunit is responsible for the synthesis of L-tryptophan from indole and L-serine. The polypeptide is Tryptophan synthase beta chain (Bordetella petrii (strain ATCC BAA-461 / DSM 12804 / CCUG 43448)).